The chain runs to 350 residues: uncharacterized protein (350 aa).

3 disordered regions span residues 1-21, 237-266, and 278-298; these read MDSF…SSLN, NSDV…PISP, and EMST…KKRT. 2 stretches are compositionally biased toward polar residues: residues 10–21 and 246–259; these read KPTTATSNSSLN and EDSS…TKPS. Basic residues predominate over residues 287-298; it reads SRSRTPSSKKRT.

It localises to the nucleus. This is an uncharacterized protein from Schizosaccharomyces pombe (strain 972 / ATCC 24843) (Fission yeast).